A 535-amino-acid polypeptide reads, in one-letter code: Calcium-dependent protein kinase 5 (535 aa).

The segment at 1-46 (MGNACRGSFGGKTFQGYPQPQDHSESNSNPKHNSDSPKPKKEQQPL) is disordered. A lipid anchor (N-myristoyl glycine) is attached at Gly-2. Cys-5 carries the S-palmitoyl cysteine lipid modification. Residues 32–43 (HNSDSPKPKKEQ) show a composition bias toward basic and acidic residues. Residues 72-330 (YTLGRKLGQG…AHEVLCHPWI (259 aa)) enclose the Protein kinase domain. Residues 78–86 (LGQGQFGTT) and Lys-101 each bind ATP. Asp-196 serves as the catalytic Proton acceptor. Residues 336–366 (APDRALDPAVLSRLKHFSAMNKLKKMALRVI) are autoinhibitory domain. 4 EF-hand domains span residues 373–408 (EEIAGLKEMFKAMDTDNSGAITFDELKAGLRKYGST), 409–444 (LKDIEIRELMDAADVDNSGTIDYGEFIAATIHLNKL), 445–480 (DREEHLMAAFQYFDKDGSGYITVDELQQACADHNIT), and 484–514 (FEDIIREVDQDNDGRIDYGEFVAMMQKGNPC). The Ca(2+) site is built by Asp-386, Asp-388, Ser-390, Glu-397, Asp-422, Asp-424, Ser-426, Thr-428, Glu-433, Asp-458, Asp-460, Ser-462, Tyr-464, Glu-469, Asp-492, Asp-494, Asp-496, Arg-498, and Glu-503.

It belongs to the protein kinase superfamily. Ser/Thr protein kinase family. CDPK subfamily.

It localises to the cell membrane. The enzyme catalyses L-seryl-[protein] + ATP = O-phospho-L-seryl-[protein] + ADP + H(+). It carries out the reaction L-threonyl-[protein] + ATP = O-phospho-L-threonyl-[protein] + ADP + H(+). With respect to regulation, activated by calcium. Autophosphorylation may play an important role in the regulation of the kinase activity. In terms of biological role, regulates the production of reactive oxygen species (ROS) by NADPH oxidase. This is Calcium-dependent protein kinase 5 (CPK5) from Solanum tuberosum (Potato).